We begin with the raw amino-acid sequence, 314 residues long: Tyrosine recombinase XerC (314 aa).

The region spanning 1–85 (MNEQVEAFLR…AVKSFFTFLT (85 aa)) is the Core-binding (CB) domain. The Tyr recombinase domain occupies 106-291 (DLPRALTPRQ…NHESSHTPHA (186 aa)). Catalysis depends on residues Arg147, Lys171, His243, Arg246, and His269. Residue Tyr278 is the O-(3'-phospho-DNA)-tyrosine intermediate of the active site. The interval 284–314 (ESSHTPHAHPAPRASEVNGVRDEQALVPEEK) is disordered. A compositionally biased stretch (basic and acidic residues) spans 302–314 (GVRDEQALVPEEK).

This sequence belongs to the 'phage' integrase family. XerC subfamily. Forms a cyclic heterotetrameric complex composed of two molecules of XerC and two molecules of XerD.

It localises to the cytoplasm. Site-specific tyrosine recombinase, which acts by catalyzing the cutting and rejoining of the recombining DNA molecules. The XerC-XerD complex is essential to convert dimers of the bacterial chromosome into monomers to permit their segregation at cell division. It also contributes to the segregational stability of plasmids. The chain is Tyrosine recombinase XerC from Roseiflexus castenholzii (strain DSM 13941 / HLO8).